The primary structure comprises 315 residues: Olfactory receptor 5M10 (315 aa).

Residues 1-25 (MLSPNHTIVTEFILLGLTDDPVLEK) lie on the Extracellular side of the membrane. The N-linked (GlcNAc...) asparagine glycan is linked to N5. A helical membrane pass occupies residues 26–46 (ILFGVFLAIYLITLAGNLCMI). At 47–54 (LLIRTNSQ) the chain is on the cytoplasmic side. A helical transmembrane segment spans residues 55–75 (LQTPMYFFLGHLSFVDICYSS). Residues 76 to 99 (NVTPNMLHNFLSEQKTISYAGCFT) lie on the Extracellular side of the membrane. Residues C97 and C189 are joined by a disulfide bond. The helical transmembrane segment at 100–120 (QCLLFIALVITEFYFLASMAL) threads the bilayer. At 121-139 (DRYVAICSPLHYSSRMSKN) the chain is on the cytoplasmic side. A helical transmembrane segment spans residues 140–160 (ICISLVTVPYMYGFLNGLSQT). Topologically, residues 161-196 (LLTFHLSFCGSLEINHFYCADPPLIMLACSDTRVKK) are extracellular. The chain crosses the membrane as a helical span at residues 197-217 (MAMFVVAGFTLSSSLFIILLS). At 218 to 237 (YLFIFAAIFRIRSAEGRHKA) the chain is on the cytoplasmic side. Residues 238–258 (FSTCASHLTIVTLFYGTLFCM) traverse the membrane as a helical segment. At 259–271 (YVRPPSEKSVEES) the chain is on the extracellular side. Residues 272 to 292 (KIIAVFYTFLSPMLNPLIYSL) traverse the membrane as a helical segment. Topologically, residues 293-315 (RNRDVILAIQQMIRGKSFCKIAV) are cytoplasmic.

This sequence belongs to the G-protein coupled receptor 1 family.

The protein localises to the cell membrane. Functionally, odorant receptor. The chain is Olfactory receptor 5M10 (OR5M10) from Homo sapiens (Human).